The following is a 256-amino-acid chain: Trans-aconitate 2-methyltransferase (256 aa).

The protein belongs to the methyltransferase superfamily. Tam family.

It localises to the cytoplasm. It catalyses the reaction trans-aconitate + S-adenosyl-L-methionine = (E)-3-(methoxycarbonyl)pent-2-enedioate + S-adenosyl-L-homocysteine. Catalyzes the S-adenosylmethionine monomethyl esterification of trans-aconitate. The polypeptide is Trans-aconitate 2-methyltransferase (Agrobacterium fabrum (strain C58 / ATCC 33970) (Agrobacterium tumefaciens (strain C58))).